A 173-amino-acid polypeptide reads, in one-letter code: NADH-ubiquinone oxidoreductase chain 6 (173 aa).

6 consecutive transmembrane segments (helical) span residues 1 to 21 (MIYF…AVAS), 27 to 47 (FAAL…VGYG), 53 to 73 (LVLF…SAAL), 82 to 102 (WGSW…LLVG), 106 to 126 (YGWW…MSVL), and 141 to 161 (GFLL…VLEI).

The protein belongs to the complex I subunit 6 family.

It localises to the mitochondrion membrane. The catalysed reaction is a ubiquinone + NADH + 5 H(+)(in) = a ubiquinol + NAD(+) + 4 H(+)(out). Functionally, core subunit of the mitochondrial membrane respiratory chain NADH dehydrogenase (Complex I) that is believed to belong to the minimal assembly required for catalysis. Complex I functions in the transfer of electrons from NADH to the respiratory chain. The immediate electron acceptor for the enzyme is believed to be ubiquinone. The sequence is that of NADH-ubiquinone oxidoreductase chain 6 (MT-ND6) from Latimeria chalumnae (Coelacanth).